The following is a 527-amino-acid chain: Type-2 serine--tRNA ligase (527 aa).

Ala317 lines the L-serine pocket. Cys319 provides a ligand contact to Zn(2+). An L-serine-binding site is contributed by Arg349. Residues 349 to 351 (RWE) and 360 to 361 (RV) contribute to the ATP site. 366–368 (RIE) serves as a coordination point for L-serine. Zn(2+) is bound by residues Glu368 and Cys478. Arg485 lines the ATP pocket.

It belongs to the class-II aminoacyl-tRNA synthetase family. Type-2 seryl-tRNA synthetase subfamily. Homodimer. Zn(2+) is required as a cofactor.

Its subcellular location is the cytoplasm. It catalyses the reaction tRNA(Ser) + L-serine + ATP = L-seryl-tRNA(Ser) + AMP + diphosphate + H(+). It carries out the reaction tRNA(Sec) + L-serine + ATP = L-seryl-tRNA(Sec) + AMP + diphosphate + H(+). Its pathway is aminoacyl-tRNA biosynthesis; selenocysteinyl-tRNA(Sec) biosynthesis; L-seryl-tRNA(Sec) from L-serine and tRNA(Sec): step 1/1. Functionally, catalyzes the attachment of serine to tRNA(Ser). Is also able to aminoacylate tRNA(Sec) with serine, to form the misacylated tRNA L-seryl-tRNA(Sec), which will be further converted into selenocysteinyl-tRNA(Sec). The chain is Type-2 serine--tRNA ligase from Methanopyrus kandleri (strain AV19 / DSM 6324 / JCM 9639 / NBRC 100938).